Consider the following 72-residue polypeptide: MAKDDVIEVEGTVIEALPNAMFQVQLDNGHKVLAHVSGKLRMNFIRILPGDRVKVELSPYDLTRGRIVWRGK.

One can recognise an S1-like domain in the interval methionine 1–lysine 72.

This sequence belongs to the IF-1 family. As to quaternary structure, component of the 30S ribosomal translation pre-initiation complex which assembles on the 30S ribosome in the order IF-2 and IF-3, IF-1 and N-formylmethionyl-tRNA(fMet); mRNA recruitment can occur at any time during PIC assembly.

The protein resides in the cytoplasm. In terms of biological role, one of the essential components for the initiation of protein synthesis. Stabilizes the binding of IF-2 and IF-3 on the 30S subunit to which N-formylmethionyl-tRNA(fMet) subsequently binds. Helps modulate mRNA selection, yielding the 30S pre-initiation complex (PIC). Upon addition of the 50S ribosomal subunit IF-1, IF-2 and IF-3 are released leaving the mature 70S translation initiation complex. The protein is Translation initiation factor IF-1 of Caldanaerobacter subterraneus subsp. tengcongensis (strain DSM 15242 / JCM 11007 / NBRC 100824 / MB4) (Thermoanaerobacter tengcongensis).